Here is a 375-residue protein sequence, read N- to C-terminus: Anhydro-N-acetylmuramic acid kinase (375 aa).

12–19 (GTSLDGVD) serves as a coordination point for ATP.

Belongs to the anhydro-N-acetylmuramic acid kinase family.

The catalysed reaction is 1,6-anhydro-N-acetyl-beta-muramate + ATP + H2O = N-acetyl-D-muramate 6-phosphate + ADP + H(+). Its pathway is amino-sugar metabolism; 1,6-anhydro-N-acetylmuramate degradation. The protein operates within cell wall biogenesis; peptidoglycan recycling. Functionally, catalyzes the specific phosphorylation of 1,6-anhydro-N-acetylmuramic acid (anhMurNAc) with the simultaneous cleavage of the 1,6-anhydro ring, generating MurNAc-6-P. Is required for the utilization of anhMurNAc either imported from the medium or derived from its own cell wall murein, and thus plays a role in cell wall recycling. The chain is Anhydro-N-acetylmuramic acid kinase from Mannheimia succiniciproducens (strain KCTC 0769BP / MBEL55E).